Here is a 101-residue protein sequence, read N- to C-terminus: Urease subunit beta (101 aa).

This sequence belongs to the urease beta subunit family. Heterotrimer of UreA (gamma), UreB (beta) and UreC (alpha) subunits. Three heterotrimers associate to form the active enzyme.

The protein resides in the cytoplasm. It carries out the reaction urea + 2 H2O + H(+) = hydrogencarbonate + 2 NH4(+). Its pathway is nitrogen metabolism; urea degradation; CO(2) and NH(3) from urea (urease route): step 1/1. This Granulibacter bethesdensis (strain ATCC BAA-1260 / CGDNIH1) protein is Urease subunit beta.